Here is a 641-residue protein sequence, read N- to C-terminus: Isomalto-dextranase (641 aa).

A signal peptide (tat-type signal) is located at residues 1–39 (MMNLSRRTLLTTGSAATLAYALGMAGSAQAATAVTARPG). The active-site Nucleophile is aspartate 227. Aspartate 288 acts as the Proton donor in catalysis. A CBM6 domain is found at 500–640 (TRYPAAFAAW…AINLNWIELD (141 aa)). Positions 556-588 (SGYRYANATDDNTTSKTTTKKANPEKADRSTVD) are disordered. Low complexity predominate over residues 561 to 576 (ANATDDNTTSKTTTKK). The segment covering 577 to 586 (ANPEKADRST) has biased composition (basic and acidic residues).

It belongs to the glycosyl hydrolase 27 family. In terms of processing, predicted to be exported by the Tat system. The position of the signal peptide cleavage has been experimentally proven.

It is found in the secreted. The enzyme catalyses Hydrolysis of (1-&gt;6)-alpha-D-glucosidic linkages in polysaccharides, to remove successive isomaltose units from the non-reducing ends of the chains.. The protein is Isomalto-dextranase (imd) of Arthrobacter globiformis.